The sequence spans 274 residues: Formamidopyrimidine-DNA glycosylase (274 aa).

Residue Pro2 is the Schiff-base intermediate with DNA of the active site. Glu3 functions as the Proton donor in the catalytic mechanism. The Proton donor; for beta-elimination activity role is filled by Lys58. DNA-binding residues include His91, Arg110, and Lys152. The FPG-type zinc-finger motif lies at 237 to 271; it reads KVYGRKNLPCLVCENKIETVVIAGRHSAFCPHCQP. The active-site Proton donor; for delta-elimination activity is the Arg261.

It belongs to the FPG family. In terms of assembly, monomer. Zn(2+) serves as cofactor.

The enzyme catalyses Hydrolysis of DNA containing ring-opened 7-methylguanine residues, releasing 2,6-diamino-4-hydroxy-5-(N-methyl)formamidopyrimidine.. It carries out the reaction 2'-deoxyribonucleotide-(2'-deoxyribose 5'-phosphate)-2'-deoxyribonucleotide-DNA = a 3'-end 2'-deoxyribonucleotide-(2,3-dehydro-2,3-deoxyribose 5'-phosphate)-DNA + a 5'-end 5'-phospho-2'-deoxyribonucleoside-DNA + H(+). In terms of biological role, involved in base excision repair of DNA damaged by oxidation or by mutagenic agents. Acts as a DNA glycosylase that recognizes and removes damaged bases. Has a preference for oxidized purines, such as 7,8-dihydro-8-oxoguanine (8-oxoG). Has AP (apurinic/apyrimidinic) lyase activity and introduces nicks in the DNA strand. Cleaves the DNA backbone by beta-delta elimination to generate a single-strand break at the site of the removed base with both 3'- and 5'-phosphates. This is Formamidopyrimidine-DNA glycosylase from Legionella pneumophila (strain Paris).